Reading from the N-terminus, the 571-residue chain is Proline--tRNA ligase (571 aa).

The protein belongs to the class-II aminoacyl-tRNA synthetase family. ProS type 1 subfamily. Homodimer.

The protein localises to the cytoplasm. It catalyses the reaction tRNA(Pro) + L-proline + ATP = L-prolyl-tRNA(Pro) + AMP + diphosphate. Functionally, catalyzes the attachment of proline to tRNA(Pro) in a two-step reaction: proline is first activated by ATP to form Pro-AMP and then transferred to the acceptor end of tRNA(Pro). As ProRS can inadvertently accommodate and process non-cognate amino acids such as alanine and cysteine, to avoid such errors it has two additional distinct editing activities against alanine. One activity is designated as 'pretransfer' editing and involves the tRNA(Pro)-independent hydrolysis of activated Ala-AMP. The other activity is designated 'posttransfer' editing and involves deacylation of mischarged Ala-tRNA(Pro). The misacylated Cys-tRNA(Pro) is not edited by ProRS. The protein is Proline--tRNA ligase of Syntrophotalea carbinolica (strain DSM 2380 / NBRC 103641 / GraBd1) (Pelobacter carbinolicus).